We begin with the raw amino-acid sequence, 150 residues long: uncharacterized protein (150 aa).

This is an uncharacterized protein from Mycoplasma genitalium (strain ATCC 33530 / DSM 19775 / NCTC 10195 / G37) (Mycoplasmoides genitalium).